The following is a 274-amino-acid chain: Shikimate dehydrogenase (NADP(+)) (274 aa).

Residues 14-16 and threonine 60 contribute to the shikimate site; that span reads SKS. Lysine 64 acts as the Proton acceptor in catalysis. Glutamate 76 provides a ligand contact to NADP(+). The shikimate site is built by asparagine 85 and aspartate 101. Residues 126-130, 150-155, and methionine 214 each bind NADP(+); these read GAGGA and NRTAEK. Tyrosine 216 contacts shikimate. Glycine 238 serves as a coordination point for NADP(+).

This sequence belongs to the shikimate dehydrogenase family. Homodimer.

The catalysed reaction is shikimate + NADP(+) = 3-dehydroshikimate + NADPH + H(+). It functions in the pathway metabolic intermediate biosynthesis; chorismate biosynthesis; chorismate from D-erythrose 4-phosphate and phosphoenolpyruvate: step 4/7. In terms of biological role, involved in the biosynthesis of the chorismate, which leads to the biosynthesis of aromatic amino acids. Catalyzes the reversible NADPH linked reduction of 3-dehydroshikimate (DHSA) to yield shikimate (SA). The sequence is that of Shikimate dehydrogenase (NADP(+)) from Pseudomonas paraeruginosa (strain DSM 24068 / PA7) (Pseudomonas aeruginosa (strain PA7)).